Reading from the N-terminus, the 156-residue chain is Ribosomal RNA large subunit methyltransferase H (156 aa).

S-adenosyl-L-methionine contacts are provided by residues L73, G104, and 123-128 (LSPLTL).

This sequence belongs to the RNA methyltransferase RlmH family. As to quaternary structure, homodimer.

Its subcellular location is the cytoplasm. The catalysed reaction is pseudouridine(1915) in 23S rRNA + S-adenosyl-L-methionine = N(3)-methylpseudouridine(1915) in 23S rRNA + S-adenosyl-L-homocysteine + H(+). In terms of biological role, specifically methylates the pseudouridine at position 1915 (m3Psi1915) in 23S rRNA. This chain is Ribosomal RNA large subunit methyltransferase H, found in Pseudoalteromonas atlantica (strain T6c / ATCC BAA-1087).